The chain runs to 72 residues: Translational regulator CsrA (72 aa).

Belongs to the CsrA/RsmA family. Homodimer; the beta-strands of each monomer intercalate to form a hydrophobic core, while the alpha-helices form wings that extend away from the core.

The protein resides in the cytoplasm. A translational regulator that binds mRNA to regulate translation initiation and/or mRNA stability. Usually binds in the 5'-UTR at or near the Shine-Dalgarno sequence preventing ribosome-binding, thus repressing translation. Its main target seems to be the major flagellin gene, while its function is anatagonized by FliW. This Clostridium botulinum (strain 657 / Type Ba4) protein is Translational regulator CsrA.